A 33-amino-acid polypeptide reads, in one-letter code: Alpha-amanitin proprotein (33 aa).

A propeptide spanning residues 1–10 (MSDINATRLP) is cleaved from the precursor. The residue at position 11 (I11) is a (3R,4R)-4,5-dihydroxyisoleucine; in form alpha-amanitin. Residue I11 is modified to (3R,4S)-4-hydroxyisoleucine; in form gamma-amanitin. A cross-link (cyclopeptide (Ile-Pro)) is located at residues 11–18 (IWGIGCNP). Positions 12–16 (WGIGC) form a cross-link, 2'-cysteinyl-6'-hydroxytryptophan sulfoxide (Trp-Cys). Residue P18 is modified to 4-hydroxyproline. Positions 19–33 (SVGDEVTALLTSGEA) are excised as a propeptide.

It belongs to the MSDIN fungal toxin family. In terms of processing, processed by the macrocyclase-peptidase enzyme POPB to yield a toxic cyclic decapeptide. POPB first removes 10 residues from the N-terminus. Conformational trapping of the remaining peptide forces the enzyme to release this intermediate rather than proceed to macrocyclization. The enzyme rebinds the remaining peptide in a different conformation and catalyzes macrocyclization of the N-terminal 8 residues.

Functionally, major toxin belonging to the bicyclic octapeptides amatoxins that acts by binding non-competitively to RNA polymerase II and greatly slowing the elongation of transcripts from target promoters. The polypeptide is Alpha-amanitin proprotein (Amanita fuliginea (East Asian brown death cap)).